Consider the following 132-residue polypeptide: Guanyl-specific ribonuclease C2 (132 aa).

An N-terminal signal peptide occupies residues 1–26; the sequence is MLYNKLITIAALLVPALAAPQGLDVR. Intrachain disulfides connect Cys-28-Cys-36 and Cys-32-Cys-129. His-66 is a catalytic residue. The active-site Proton acceptor is the Glu-84. His-118 (proton donor) is an active-site residue.

The protein belongs to the ribonuclease N1/T1 family.

It is found in the secreted. It catalyses the reaction [RNA] containing guanosine + H2O = an [RNA fragment]-3'-guanosine-3'-phosphate + a 5'-hydroxy-ribonucleotide-3'-[RNA fragment].. The chain is Guanyl-specific ribonuclease C2 from Aspergillus clavatus (strain ATCC 1007 / CBS 513.65 / DSM 816 / NCTC 3887 / NRRL 1 / QM 1276 / 107).